The primary structure comprises 303 residues: N-acetyl-D-glucosamine kinase (303 aa).

Residues 4–11 and 133–140 contribute to the ATP site; these read GFDIGGTK and GVGGGLIF. The Zn(2+) site is built by His-157, Cys-177, Cys-179, and Cys-184.

This sequence belongs to the ROK (NagC/XylR) family. NagK subfamily.

It carries out the reaction N-acetyl-D-glucosamine + ATP = N-acetyl-D-glucosamine 6-phosphate + ADP + H(+). It functions in the pathway cell wall biogenesis; peptidoglycan recycling. Catalyzes the phosphorylation of N-acetyl-D-glucosamine (GlcNAc) derived from cell-wall degradation, yielding GlcNAc-6-P. The protein is N-acetyl-D-glucosamine kinase of Escherichia coli O81 (strain ED1a).